A 236-amino-acid polypeptide reads, in one-letter code: tRNA (guanine-N(7)-)-methyltransferase (236 aa).

Positions 68, 93, 120, and 143 each coordinate S-adenosyl-L-methionine. Residue Asp143 is part of the active site. Residues Lys147, Asp179, and Thr212–Glu215 contribute to the substrate site.

It belongs to the class I-like SAM-binding methyltransferase superfamily. TrmB family.

The catalysed reaction is guanosine(46) in tRNA + S-adenosyl-L-methionine = N(7)-methylguanosine(46) in tRNA + S-adenosyl-L-homocysteine. The protein operates within tRNA modification; N(7)-methylguanine-tRNA biosynthesis. Catalyzes the formation of N(7)-methylguanine at position 46 (m7G46) in tRNA. The sequence is that of tRNA (guanine-N(7)-)-methyltransferase from Nitrosococcus oceani (strain ATCC 19707 / BCRC 17464 / JCM 30415 / NCIMB 11848 / C-107).